Here is a 283-residue protein sequence, read N- to C-terminus: Pantothenate synthetase (283 aa).

ATP is bound at residue 30–37; that stretch reads MGALHEGH. H37 (proton donor) is an active-site residue. A (R)-pantoate-binding site is contributed by Q61. Q61 provides a ligand contact to beta-alanine. 147–150 is an ATP binding site; the sequence is GMKD. Q153 lines the (R)-pantoate pocket. Residues V176 and 184–187 contribute to the ATP site; that span reads LSSR.

The protein belongs to the pantothenate synthetase family. In terms of assembly, homodimer.

The protein resides in the cytoplasm. The catalysed reaction is (R)-pantoate + beta-alanine + ATP = (R)-pantothenate + AMP + diphosphate + H(+). It functions in the pathway cofactor biosynthesis; (R)-pantothenate biosynthesis; (R)-pantothenate from (R)-pantoate and beta-alanine: step 1/1. Catalyzes the condensation of pantoate with beta-alanine in an ATP-dependent reaction via a pantoyl-adenylate intermediate. The protein is Pantothenate synthetase of Endomicrobium trichonymphae.